We begin with the raw amino-acid sequence, 258 residues long: Shikimate dehydrogenase (NADP(+)) (258 aa).

Shikimate is bound by residues 14-16 (SES) and Thr61. Lys65 acts as the Proton acceptor in catalysis. The shikimate site is built by Asn86 and Asp101. NADP(+)-binding positions include 125 to 129 (GSGGS) and Leu211. A shikimate-binding site is contributed by Tyr213. Residue Gly234 participates in NADP(+) binding.

It belongs to the shikimate dehydrogenase family. Homodimer.

It carries out the reaction shikimate + NADP(+) = 3-dehydroshikimate + NADPH + H(+). Its pathway is metabolic intermediate biosynthesis; chorismate biosynthesis; chorismate from D-erythrose 4-phosphate and phosphoenolpyruvate: step 4/7. Involved in the biosynthesis of the chorismate, which leads to the biosynthesis of aromatic amino acids. Catalyzes the reversible NADPH linked reduction of 3-dehydroshikimate (DHSA) to yield shikimate (SA). In Clostridium botulinum (strain 657 / Type Ba4), this protein is Shikimate dehydrogenase (NADP(+)).